The following is a 144-amino-acid chain: Maximins 4/H3 type 2 (144 aa).

The N-terminal stretch at 1 to 18 (MNFKYIIAVSFFIASAYA) is a signal peptide. Residues 19–43 (RRNEKDVQSLSQRDVLEEESLREIR) constitute a propeptide that is removed on maturation. Asparagine amide is present on asparagine 70. A propeptide spanning residues 74 to 123 (TAEDHEVMKRLEAVMRDLDSLDHPEEASERETRGFNQEEIANLFTKKEKR) is cleaved from the precursor. Isoleucine 143 is modified (isoleucine amide).

The protein belongs to the bombinin family. In terms of tissue distribution, expressed by the skin glands.

The protein resides in the secreted. Maximin-4 shows antibacterial activity against both Gram-positive and Gram-negative bacteria. It also shows antimicrobial activity against the fungus C.albicans, but not against A.flavus nor P.uticale. It has little hemolytic activity. It does not possess a significant cytotoxicity against tumor cell lines. It does not possess a significant anti-HIV activity. In terms of biological role, maximin-H3 shows antibacterial activity against both Gram-positive and Gram-negative bacteria. It also shows antimicrobial activity against the fungus C.albicans. Shows strong hemolytic activity. The protein is Maximins 4/H3 type 2 of Bombina maxima (Giant fire-bellied toad).